Consider the following 161-residue polypeptide: Regulator of ribonuclease activity A (161 aa).

It belongs to the RraA family. As to quaternary structure, homotrimer. Binds to both RNA-binding sites in the C-terminal region of Rne and to RhlB.

The protein localises to the cytoplasm. Its function is as follows. Globally modulates RNA abundance by binding to RNase E (Rne) and regulating its endonucleolytic activity. Can modulate Rne action in a substrate-dependent manner by altering the composition of the degradosome. Modulates RNA-binding and helicase activities of the degradosome. The sequence is that of Regulator of ribonuclease activity A from Citrobacter koseri (strain ATCC BAA-895 / CDC 4225-83 / SGSC4696).